The primary structure comprises 221 residues: Ribonuclease T (221 aa).

The Exonuclease domain maps to 20-194 (VVIDIETAGF…YDTLQTANLF (175 aa)). Asp23, Glu25, His181, and Asp186 together coordinate Mg(2+). His181 acts as the Proton donor/acceptor in catalysis.

The protein belongs to the RNase T family. In terms of assembly, homodimer. Mg(2+) is required as a cofactor.

Functionally, trims short 3' overhangs of a variety of RNA species, leaving a one or two nucleotide 3' overhang. Responsible for the end-turnover of tRNA: specifically removes the terminal AMP residue from uncharged tRNA (tRNA-C-C-A). Also appears to be involved in tRNA biosynthesis. The sequence is that of Ribonuclease T from Buchnera aphidicola subsp. Acyrthosiphon pisum (strain APS) (Acyrthosiphon pisum symbiotic bacterium).